The primary structure comprises 431 residues: Anaerobic glycerol-3-phosphate dehydrogenase subunit B (431 aa).

The protein belongs to the anaerobic G-3-P dehydrogenase subunit B family. Composed of a catalytic GlpA/B dimer and of membrane bound GlpC. FMN serves as cofactor.

It catalyses the reaction a quinone + sn-glycerol 3-phosphate = dihydroxyacetone phosphate + a quinol. It participates in polyol metabolism; glycerol degradation via glycerol kinase pathway; glycerone phosphate from sn-glycerol 3-phosphate (anaerobic route): step 1/1. Conversion of glycerol 3-phosphate to dihydroxyacetone. Uses fumarate or nitrate as electron acceptor. This Mannheimia succiniciproducens (strain KCTC 0769BP / MBEL55E) protein is Anaerobic glycerol-3-phosphate dehydrogenase subunit B.